A 466-amino-acid chain; its full sequence is Zinc finger protein ZIC 3 (466 aa).

A compositionally biased stretch (polar residues) spans 65–80; the sequence is DLSSGQSSAFTPQGSG. Residues 65-103 form a disordered region; that stretch reads DLSSGQSSAFTPQGSGYANALGHHHHHHHHHHASQVPTY. A compositionally biased stretch (basic residues) spans 86-97; sequence GHHHHHHHHHHA. A Glycyl lysine isopeptide (Lys-Gly) (interchain with G-Cter in SUMO2) cross-link involves residue Lys-247. The C2H2-type 1; atypical zinc-finger motif lies at 250–285; it reads LSCKWIEEAQLSRPKKSCDRTFSTMHELVTHVTMEH. The C2H2-type 2; atypical zinc-finger motif lies at 294 to 321; the sequence is HVCYWEECPREGKSFKAKYKLVNHIRVH. 2 consecutive short sequence motifs (nuclear localization signal) follow at residues 296 to 321 and 329 to 351; these read CYWE…IRVH and CPFP…KRTH. C2H2-type zinc fingers lie at residues 327–351, 357–381, and 387–409; these read FPCP…KRTH, FKCE…MHVH, and YICK…MKVH. The interval 403–466 is disordered; the sequence is RKHMKVHESQ…LPPNFNEWYV (64 aa). A compositionally biased stretch (low complexity) spans 411–427; sequence SQGSDSSPAASSGYESS. Residues 434–454 are compositionally biased toward polar residues; sequence SANSKDTTKTPSAVQTSTSHN.

The protein belongs to the GLI C2H2-type zinc-finger protein family. In terms of assembly, interacts with KPNA1 and KPNA6. Interacts (via C2H2-type domains 3, 4 and 5) with GLI3; the interaction enhances its transcriptional activity. Interacts (via the C2H2-type domains 3, 4 and 5) with MDFIC (via the C2H2-type domains 3, 4 and 5); the interaction reduces its transcriptional activity. CNS. A high level expression is seen in the cerebellum.

It localises to the nucleus. The protein localises to the cytoplasm. In terms of biological role, acts as a transcriptional activator. Required in the earliest stages in both axial midline development and left-right (LR) asymmetry specification. Binds to the minimal GLI-consensus sequence 5'-GGGTGGTC-3'. The sequence is that of Zinc finger protein ZIC 3 (Zic3) from Mus musculus (Mouse).